We begin with the raw amino-acid sequence, 307 residues long: F-box protein At2g23160 (307 aa).

The 48-residue stretch at 2–49 (NSSSPISIDLIAEILSRVPSKSVARFRCVSKPWASMIRRPYFTELFLT) folds into the F-box domain.

The protein is F-box protein At2g23160 of Arabidopsis thaliana (Mouse-ear cress).